The primary structure comprises 96 residues: Co-chaperonin GroES (96 aa).

This sequence belongs to the GroES chaperonin family. Heptamer of 7 subunits arranged in a ring. Interacts with the chaperonin GroEL.

Its subcellular location is the cytoplasm. Together with the chaperonin GroEL, plays an essential role in assisting protein folding. The GroEL-GroES system forms a nano-cage that allows encapsulation of the non-native substrate proteins and provides a physical environment optimized to promote and accelerate protein folding. GroES binds to the apical surface of the GroEL ring, thereby capping the opening of the GroEL channel. The protein is Co-chaperonin GroES of Citrifermentans bemidjiense (strain ATCC BAA-1014 / DSM 16622 / JCM 12645 / Bem) (Geobacter bemidjiensis).